Reading from the N-terminus, the 179-residue chain is Adenine phosphoribosyltransferase (179 aa).

The protein belongs to the purine/pyrimidine phosphoribosyltransferase family. Homodimer.

The protein localises to the cytoplasm. The enzyme catalyses AMP + diphosphate = 5-phospho-alpha-D-ribose 1-diphosphate + adenine. The protein operates within purine metabolism; AMP biosynthesis via salvage pathway; AMP from adenine: step 1/1. In terms of biological role, catalyzes a salvage reaction resulting in the formation of AMP, that is energically less costly than de novo synthesis. The polypeptide is Adenine phosphoribosyltransferase (Bradyrhizobium sp. (strain ORS 278)).